We begin with the raw amino-acid sequence, 435 residues long: Increased rDNA silencing protein 4 (435 aa).

4 disordered regions span residues 1-20, 39-71, 136-204, and 233-277; these read MKIPVTADAESASKDGLQHD, ASIPLEKASFSRQAPSQNPSITAKPPIPPQRAA, ASKA…NHTL, and GSKR…PDEI. Residues 11 to 20 show a composition bias toward basic and acidic residues; it reads SASKDGLQHD. Over residues 48 to 59 the composition is skewed to polar residues; sequence FSRQAPSQNPSI. 2 stretches are compositionally biased toward low complexity: residues 174–186 and 249–265; these read SSQLSTESELLQL and QRGSPSQPLLQLSSDSS. The 109-residue stretch at 327 to 435 folds into the EH domain; the sequence is ERKRYEEVWE…VPKSVWKSVQ (109 aa).

It belongs to the IRS4 family.

Positive regulator of phosphatidylinositol 4,5-bisphosphate turnover and negatively regulates signaling through the cell integrity pathway. Involved in rDNA silencing. This chain is Increased rDNA silencing protein 4 (IRS4), found in Coccidioides immitis (strain RS) (Valley fever fungus).